The primary structure comprises 325 residues: Tetraacyldisaccharide 4'-kinase (325 aa).

Position 55–62 (55–62 (TAGGNGKT)) interacts with ATP.

Belongs to the LpxK family.

It carries out the reaction a lipid A disaccharide + ATP = a lipid IVA + ADP + H(+). Its pathway is glycolipid biosynthesis; lipid IV(A) biosynthesis; lipid IV(A) from (3R)-3-hydroxytetradecanoyl-[acyl-carrier-protein] and UDP-N-acetyl-alpha-D-glucosamine: step 6/6. Its function is as follows. Transfers the gamma-phosphate of ATP to the 4'-position of a tetraacyldisaccharide 1-phosphate intermediate (termed DS-1-P) to form tetraacyldisaccharide 1,4'-bis-phosphate (lipid IVA). In Salmonella dublin (strain CT_02021853), this protein is Tetraacyldisaccharide 4'-kinase.